The following is a 397-amino-acid chain: Heterogeneous nuclear ribonucleoprotein K homolog (397 aa).

The disordered stretch occupies residues 1-41 (MMIKVGAAINGTDSPKAMKREHDNDDGDRTGRHKRPKTDGF). Basic and acidic residues predominate over residues 16–30 (KAMKREHDNDDGDRT). KH domains follow at residues 49-111 (KFEV…LKDV) and 124-189 (PCEV…IEEV). The segment at 220–279 (GGFPGNMPAGGPPNNRGPAPQRGGQGPPGGPRSYGGAITQGGGQRSFEAGDFQQFRGGPG) is disordered. Residues 224 to 241 (GNMPAGGPPNNRGPAPQR) are compositionally biased toward low complexity. In terms of domain architecture, KH 3 spans 316 to 379 (VTTAQVTIPS…QQIHSAQYLL (64 aa)).

Interacts with alg-1; the interaction is direct and may be strengthened through RNA-protein association. Expressed in gut, muscle, neuronal and hypodermal tissues. Highly expressed in the germline and oocytes.

It is found in the nucleus. The protein localises to the cytoplasm. Functionally, RNA-binding protein which functions together with alg-1, a component of the miRNA loading complex, to modulate the processing and activity of specific miRNAs such as miR-58 and let-7 to regulate gene expression at the post-transcriptional level during embryonic, hypodermal and neuronal development. Promotes the lsy-6-mediated repression of cog-1 in uterine cells. In embryos, may play a role in the DNA damage response. The chain is Heterogeneous nuclear ribonucleoprotein K homolog from Caenorhabditis elegans.